The following is a 285-amino-acid chain: Golgi phosphoprotein 3-like (285 aa).

The disordered stretch occupies residues 1–43; the sequence is MTTLTHRTRRTEVSKSCEKKIESEEDTNQERSPDNEDPGDSKD. The span at 10-43 shows a compositional bias: basic and acidic residues; sequence RTEVSKSCEKKIESEEDTNQERSPDNEDPGDSKD. Positions 67 and 76 each coordinate a 1,2-diacyl-sn-glycero-3-phospho-(1D-myo-inositol 4-phosphate). Ser-112 is modified (phosphoserine). Positions 157 and 160 each coordinate a 1,2-diacyl-sn-glycero-3-phospho-(1D-myo-inositol 4-phosphate). The segment at 176–187 is beta-hairpin required for oligomerization; the sequence is EKQNFLLFDMTT.

It belongs to the GOLPH3/VPS74 family. As to quaternary structure, homooligomer. Does not interact MYO18; differs from GOLPH3 by its inability to interact with MYO18. May interact with ARF1.

It localises to the golgi apparatus. It is found in the golgi stack membrane. The protein resides in the trans-Golgi network membrane. Functionally, phosphatidylinositol-4-phosphate-binding protein that may antagonize the action of GOLPH3 which is required for the process of vesicle budding at the Golgi and anterograde transport to the plasma membrane. This is Golgi phosphoprotein 3-like (Golph3l) from Rattus norvegicus (Rat).